The primary structure comprises 479 residues: Ribulose bisphosphate carboxylase large chain (479 aa).

Positions 1 to 2 are excised as a propeptide; it reads MS. P3 carries the N-acetylproline modification. Residue K14 is modified to N6,N6,N6-trimethyllysine. 2 residues coordinate substrate: N123 and T173. The active-site Proton acceptor is K175. Substrate is bound at residue K177. Mg(2+) is bound by residues K201, D203, and E204. Position 201 is an N6-carboxylysine (K201). H294 (proton acceptor) is an active-site residue. Substrate contacts are provided by R295, H327, and S379.

It belongs to the RuBisCO large chain family. Type I subfamily. As to quaternary structure, heterohexadecamer of 8 large chains and 8 small chains. The cofactor is Mg(2+).

It is found in the plastid. The protein localises to the chloroplast. It catalyses the reaction 2 (2R)-3-phosphoglycerate + 2 H(+) = D-ribulose 1,5-bisphosphate + CO2 + H2O. The enzyme catalyses D-ribulose 1,5-bisphosphate + O2 = 2-phosphoglycolate + (2R)-3-phosphoglycerate + 2 H(+). RuBisCO catalyzes two reactions: the carboxylation of D-ribulose 1,5-bisphosphate, the primary event in carbon dioxide fixation, as well as the oxidative fragmentation of the pentose substrate in the photorespiration process. Both reactions occur simultaneously and in competition at the same active site. The protein is Ribulose bisphosphate carboxylase large chain of Jasminum nudiflorum (Winter jasmine).